We begin with the raw amino-acid sequence, 282 residues long: MDNSSTGRYPAASLPPAYLRPGSSSFTDFLRAQAPELLPTARSFPEGSVVQAAHGTTIVALTFKGGVVIAGDRRATMGNVIAQRDMKKVFVTDDYSAVGIAGTAGIAIEIVRLFAVELRHYEKIEGVSLSLDGKANRLSGMVKGNLDAALAGLAVVPLFVGYDTDAADPDRAGRIVSYDVTGARFEETLGYQSVGSGSLFAKSALKKLYDPDADAEGAVRAAVEALYDAADDDSATGGPDLVRRIFPVVVTVTAEGAVHLPEERTSAIAETVVEGRRARPAG.

A propeptide spans 1–55 (MDNSSTGRYPAASLPPAYLRPGSSSFTDFLRAQAPELLPTARSFPEGSVVQAAHG) (removed in mature form; by autocatalysis). Thr-56 functions as the Nucleophile in the catalytic mechanism.

It belongs to the peptidase T1B family. As to quaternary structure, the 20S proteasome core is composed of 14 alpha and 14 beta subunits that assemble into four stacked heptameric rings, resulting in a barrel-shaped structure. The two inner rings, each composed of seven catalytic beta subunits, are sandwiched by two outer rings, each composed of seven alpha subunits. The catalytic chamber with the active sites is on the inside of the barrel. Has a gated structure, the ends of the cylinder being occluded by the N-termini of the alpha-subunits. Is capped by the proteasome-associated ATPase, ARC.

It localises to the cytoplasm. It carries out the reaction Cleavage of peptide bonds with very broad specificity.. Its pathway is protein degradation; proteasomal Pup-dependent pathway. With respect to regulation, the formation of the proteasomal ATPase ARC-20S proteasome complex, likely via the docking of the C-termini of ARC into the intersubunit pockets in the alpha-rings, may trigger opening of the gate for substrate entry. Interconversion between the open-gate and close-gate conformations leads to a dynamic regulation of the 20S proteasome proteolysis activity. Its function is as follows. Component of the proteasome core, a large protease complex with broad specificity involved in protein degradation. This chain is Proteasome subunit beta, found in Actinosynnema mirum (strain ATCC 29888 / DSM 43827 / JCM 3225 / NBRC 14064 / NCIMB 13271 / NRRL B-12336 / IMRU 3971 / 101).